The chain runs to 312 residues: Probable cell division protein WhiA (312 aa).

Positions 274–308 (SLKELGTLVPGGPISKSGVNHRLRKLNAYADELRQ) form a DNA-binding region, H-T-H motif.

It belongs to the WhiA family.

In terms of biological role, involved in cell division and chromosome segregation. The polypeptide is Probable cell division protein WhiA (Limosilactobacillus fermentum (strain NBRC 3956 / LMG 18251) (Lactobacillus fermentum)).